The chain runs to 212 residues: Imidazole glycerol phosphate synthase subunit HisH (212 aa).

In terms of domain architecture, Glutamine amidotransferase type-1 spans 1–212; that stretch reads MLAILDYKAG…YAYCKEASRA (212 aa). C79 functions as the Nucleophile in the catalytic mechanism. Active-site residues include H187 and E189.

In terms of assembly, heterodimer of HisH and HisF.

It localises to the cytoplasm. The enzyme catalyses 5-[(5-phospho-1-deoxy-D-ribulos-1-ylimino)methylamino]-1-(5-phospho-beta-D-ribosyl)imidazole-4-carboxamide + L-glutamine = D-erythro-1-(imidazol-4-yl)glycerol 3-phosphate + 5-amino-1-(5-phospho-beta-D-ribosyl)imidazole-4-carboxamide + L-glutamate + H(+). It catalyses the reaction L-glutamine + H2O = L-glutamate + NH4(+). It participates in amino-acid biosynthesis; L-histidine biosynthesis; L-histidine from 5-phospho-alpha-D-ribose 1-diphosphate: step 5/9. Its function is as follows. IGPS catalyzes the conversion of PRFAR and glutamine to IGP, AICAR and glutamate. The HisH subunit catalyzes the hydrolysis of glutamine to glutamate and ammonia as part of the synthesis of IGP and AICAR. The resulting ammonia molecule is channeled to the active site of HisF. The chain is Imidazole glycerol phosphate synthase subunit HisH from Nitratidesulfovibrio vulgaris (strain DSM 19637 / Miyazaki F) (Desulfovibrio vulgaris).